The chain runs to 335 residues: 3-hydroxyisobutyrate dehydrogenase, mitochondrial (335 aa).

A mitochondrion-targeting transit peptide spans methionine 1 to methionine 35. An NAD(+)-binding site is contributed by threonine 39–aspartate 68. Residues lysine 59, lysine 75, and lysine 78 each carry the N6-acetyllysine; alternate modification. An N6-succinyllysine; alternate mark is found at lysine 59, lysine 75, and lysine 78. Position 94 is an N6-succinyllysine (lysine 94). NAD(+) contacts are provided by residues leucine 102–proline 103 and asparagine 107. Lysine 120 is modified (N6-acetyllysine). NAD(+) is bound at residue threonine 133. Position 140 is an N6-succinyllysine (lysine 140). Residue lysine 144 is modified to N6-acetyllysine. N6-acetyllysine; alternate is present on lysine 148. At lysine 148 the chain carries N6-succinyllysine; alternate. The active site involves lysine 208. Lysine 237 and lysine 241 each carry N6-acetyllysine; alternate. N6-succinyllysine; alternate occurs at positions 237 and 241. Lysine 283 serves as a coordination point for NAD(+). At lysine 296 the chain carries N6-succinyllysine. Position 320 is an N6-acetyllysine; alternate (lysine 320). N6-succinyllysine; alternate is present on lysine 320.

The protein belongs to the HIBADH-related family. 3-hydroxyisobutyrate dehydrogenase subfamily. As to quaternary structure, homodimer.

The protein resides in the mitochondrion. It catalyses the reaction 3-hydroxy-2-methylpropanoate + NAD(+) = 2-methyl-3-oxopropanoate + NADH + H(+). Its pathway is amino-acid degradation; L-valine degradation. In Mus musculus (Mouse), this protein is 3-hydroxyisobutyrate dehydrogenase, mitochondrial (Hibadh).